The following is a 487-amino-acid chain: Malonate-semialdehyde dehydrogenase 2 (487 aa).

Residues Phe-154, Lys-178, Glu-181, Arg-182, and Ser-231 each contribute to the NAD(+) site. Cys-286 acts as the Nucleophile in catalysis. NAD(+) is bound at residue Glu-386.

Belongs to the aldehyde dehydrogenase family. IolA subfamily. In terms of assembly, homotetramer.

It catalyses the reaction 3-oxopropanoate + NAD(+) + CoA + H2O = hydrogencarbonate + acetyl-CoA + NADH + H(+). The catalysed reaction is 2-methyl-3-oxopropanoate + NAD(+) + CoA + H2O = propanoyl-CoA + hydrogencarbonate + NADH + H(+). The protein operates within polyol metabolism; myo-inositol degradation into acetyl-CoA; acetyl-CoA from myo-inositol: step 7/7. Catalyzes the oxidation of malonate semialdehyde (MSA) and methylmalonate semialdehyde (MMSA) into acetyl-CoA and propanoyl-CoA, respectively. Is involved in a myo-inositol catabolic pathway. Bicarbonate, and not CO2, is the end-product of the enzymatic reaction. This is Malonate-semialdehyde dehydrogenase 2 from Bacillus anthracis.